A 476-amino-acid polypeptide reads, in one-letter code: UDP-N-acetylmuramate--L-alanine ligase (476 aa).

125 to 131 (GTHGKTT) contacts ATP.

It belongs to the MurCDEF family.

Its subcellular location is the cytoplasm. It catalyses the reaction UDP-N-acetyl-alpha-D-muramate + L-alanine + ATP = UDP-N-acetyl-alpha-D-muramoyl-L-alanine + ADP + phosphate + H(+). It functions in the pathway cell wall biogenesis; peptidoglycan biosynthesis. Functionally, cell wall formation. The sequence is that of UDP-N-acetylmuramate--L-alanine ligase from Actinobacillus succinogenes (strain ATCC 55618 / DSM 22257 / CCUG 43843 / 130Z).